A 296-amino-acid polypeptide reads, in one-letter code: Antisense-enhancing sequence 1 (296 aa).

E47 is an active-site residue.

This sequence belongs to the PhzF family.

May have isomerase activity. Enhances target gene silencing when coexpressed with antisense RNA. The protein is Antisense-enhancing sequence 1 (aes1) of Schizosaccharomyces pombe (strain 972 / ATCC 24843) (Fission yeast).